Here is a 339-residue protein sequence, read N- to C-terminus: Fructose-1,6-bisphosphatase class 1 (339 aa).

Residues Glu101, Asp120, Leu122, and Asp123 each contribute to the Mg(2+) site. Substrate is bound by residues 123–126 (DGSS), Asn215, and Lys281. Residue Glu287 participates in Mg(2+) binding.

This sequence belongs to the FBPase class 1 family. Homotetramer. It depends on Mg(2+) as a cofactor.

The protein resides in the cytoplasm. It catalyses the reaction beta-D-fructose 1,6-bisphosphate + H2O = beta-D-fructose 6-phosphate + phosphate. It functions in the pathway carbohydrate biosynthesis; gluconeogenesis. This Polynucleobacter necessarius subsp. necessarius (strain STIR1) protein is Fructose-1,6-bisphosphatase class 1.